Consider the following 511-residue polypeptide: Histidine ammonia-lyase (511 aa).

Residues 143–145 constitute a cross-link (5-imidazolinone (Ala-Gly)); that stretch reads ASG. Serine 144 carries the 2,3-didehydroalanine (Ser) modification.

It belongs to the PAL/histidase family. Contains an active site 4-methylidene-imidazol-5-one (MIO), which is formed autocatalytically by cyclization and dehydration of residues Ala-Ser-Gly.

It localises to the cytoplasm. It carries out the reaction L-histidine = trans-urocanate + NH4(+). It participates in amino-acid degradation; L-histidine degradation into L-glutamate; N-formimidoyl-L-glutamate from L-histidine: step 1/3. This is Histidine ammonia-lyase from Vibrio parahaemolyticus serotype O3:K6 (strain RIMD 2210633).